We begin with the raw amino-acid sequence, 329 residues long: Adenylate isopentenyltransferase 7, mitochondrial (329 aa).

Residues 1-40 (MKFSISSLKQVQPILCFKNKLSKVNVNSFLHPKEKVIFVM) constitute a mitochondrion transit peptide. 41 to 48 (GATGSGKS) is an ATP binding site.

This sequence belongs to the IPP transferase family. In terms of tissue distribution, expressed in both the vascular stele and the phloem companion cells of the root, in endodermis of the root elongation zone, trichomes on young leaves, and some pollen tubes.

It localises to the mitochondrion. It catalyses the reaction dimethylallyl diphosphate + ADP = N(6)-(dimethylallyl)adenosine 5'-diphosphate + diphosphate. It carries out the reaction dimethylallyl diphosphate + ATP = N(6)-(dimethylallyl)adenosine 5'-triphosphate + diphosphate. Functionally, involved in cytokinin biosynthesis. Catalyzes the transfer of an isopentenyl group from dimethylallyl diphosphate (DMAPP) to ATP and ADP. This is Adenylate isopentenyltransferase 7, mitochondrial (IPT7) from Arabidopsis thaliana (Mouse-ear cress).